A 291-amino-acid polypeptide reads, in one-letter code: Pyridoxal 5'-phosphate synthase subunit PdxS (291 aa).

Asp23 lines the D-ribose 5-phosphate pocket. The Schiff-base intermediate with D-ribose 5-phosphate role is filled by Lys80. Gly152 serves as a coordination point for D-ribose 5-phosphate. D-glyceraldehyde 3-phosphate is bound at residue Arg164. Residues Gly213 and 234–235 each bind D-ribose 5-phosphate; that span reads GS.

This sequence belongs to the PdxS/SNZ family. In terms of assembly, in the presence of PdxT, forms a dodecamer of heterodimers.

It carries out the reaction aldehydo-D-ribose 5-phosphate + D-glyceraldehyde 3-phosphate + L-glutamine = pyridoxal 5'-phosphate + L-glutamate + phosphate + 3 H2O + H(+). It functions in the pathway cofactor biosynthesis; pyridoxal 5'-phosphate biosynthesis. Functionally, catalyzes the formation of pyridoxal 5'-phosphate from ribose 5-phosphate (RBP), glyceraldehyde 3-phosphate (G3P) and ammonia. The ammonia is provided by the PdxT subunit. Can also use ribulose 5-phosphate and dihydroxyacetone phosphate as substrates, resulting from enzyme-catalyzed isomerization of RBP and G3P, respectively. The sequence is that of Pyridoxal 5'-phosphate synthase subunit PdxS from Bifidobacterium adolescentis (strain ATCC 15703 / DSM 20083 / NCTC 11814 / E194a).